A 252-amino-acid polypeptide reads, in one-letter code: MFGFFKKDKAVEVEVPTQVPAHIGIIMDGNGRWAKKRMQPRVFGHKAGMEALQTVTKAANKLGVKVITVYAFSTENWTRPDQEVKFIMNLPVEFYDNYVPELHANNVKIQMIGETDRLPKQTFEALTKAEELTKNNTGLILNFALNYGGRAEITQALKLISQDVLDAKINPGDITEELIGNYLFTQHLPKDLRDPDLIIRTSGELRLSNFLPWQGAYSELYFTDTLWPDFDEAALQEAILAYNRRHRRFGGV.

The active site involves aspartate 28. Aspartate 28 serves as a coordination point for Mg(2+). Substrate is bound by residues 29-32 (GNGR), tryptophan 33, arginine 41, histidine 45, and 73-75 (STE). Residue asparagine 76 is the Proton acceptor of the active site. Substrate-binding positions include tryptophan 77, arginine 79, arginine 200, and 206–208 (RLS). Glutamate 219 is a Mg(2+) binding site.

This sequence belongs to the UPP synthase family. As to quaternary structure, homodimer. The cofactor is Mg(2+).

In terms of biological role, catalyzes the condensation of isopentenyl diphosphate (IPP) with allylic pyrophosphates generating different type of terpenoids. This is Isoprenyl transferase from Streptococcus pneumoniae serotype 4 (strain ATCC BAA-334 / TIGR4).